We begin with the raw amino-acid sequence, 1031 residues long: Serine-repeat antigen protein 6 (1031 aa).

An N-terminal signal peptide occupies residues 1 to 24 (MICPIFFLYIINVLFTQYFIKCEG). An N-linked (GlcNAc...) asparagine glycan is attached at Asn-74. Low complexity predominate over residues 91 to 101 (KVVSSSESGKG). The segment at 91-163 (KVVSSSESGK…TESSSETLNK (73 aa)) is disordered. Positions 104-139 (VSHTKVTSEGLSDTQPNVTQSVSSSTHTPGSLDSTM) are enriched in polar residues. Asn-120 carries N-linked (GlcNAc...) asparagine glycosylation. Residues 140 to 158 (STEQHSSVSQSSLPTESSS) are compositionally biased toward low complexity. The N-linked (GlcNAc...) asparagine glycan is linked to Asn-449. The tract at residues 490-567 (TLPSESPSES…GDTNYVYDFD (78 aa)) is disordered. Positions 492–505 (PSESPSESSSKSDS) are enriched in low complexity. Residues 511–535 (NDKDKNEDKDDMSKNSKEEFKNDDK) show a composition bias toward basic and acidic residues. A glycan (N-linked (GlcNAc...) asparagine) is linked at Asn-544. Residues 554 to 564 (NINNGDTNYVY) show a composition bias toward low complexity. Asn-573 carries N-linked (GlcNAc...) asparagine glycosylation. The active site involves Cys-644. Asn-674 carries N-linked (GlcNAc...) asparagine glycosylation. Residues His-810 and Asn-835 contribute to the active site. 2 N-linked (GlcNAc...) asparagine glycosylation sites follow: Asn-929 and Asn-974.

This sequence belongs to the peptidase C1 family. In terms of processing, just prior to merozoite egress from host erythrocytes, proteolytically cleaved by SUB1 to generate the active 75kDa form.

It is found in the parasitophorous vacuole lumen. The protein localises to the parasitophorous vacuole membrane. In terms of biological role, cysteine protease which plays an essential role in merozoite egress from host erythrocytes. May cleave host SPTB/beta spectrin and ANK1/ankyrin-1 which disrupts host erythrocyte actin cytoskeleton and leads to host erythrocyte cell membrane rupture. This Plasmodium falciparum (isolate 3D7) protein is Serine-repeat antigen protein 6.